A 1060-amino-acid polypeptide reads, in one-letter code: RNA-binding protein 27 (1060 aa).

Composition is skewed to basic and acidic residues over residues 91–102 and 124–143; these read LVQEKEEIKEEV and TRSE…DGKW. Disordered regions lie at residues 91 to 143 and 162 to 235; these read LVQE…DGKW and WRRG…GAQS. Over residues 165-185 the composition is skewed to basic residues; the sequence is GRSKSRSKSRGLSRSRSRSRG. Over residues 186–211 the composition is skewed to basic and acidic residues; sequence RSKDRDPNRNVEHRERSKFKSERNDL. Positions 225-235 are enriched in polar residues; it reads SSEQYSSGAQS. The C3H1-type zinc finger occupies 273–301; the sequence is LPPKRRCRDYDERGFCVLGDLCQFDHGND. Pro residues-rich tracts occupy residues 319–356 and 371–384; these read PPPG…PGPG and QPPP…PRPP. The interval 319–412 is disordered; that stretch reads PPPGLPPPPP…PNLASVGTRL (94 aa). Over residues 386–402 the composition is skewed to polar residues; it reads TQSSLINSRDQPGTSAV. Thr-447 carries the post-translational modification Phosphothreonine. Arg-455 is modified (omega-N-methylarginine). The segment at 565–592 is disordered; that stretch reads MSGLEGPLTKKPWLGKQGNNNQNKPGFL. Low complexity predominate over residues 579-588; sequence GKQGNNNQNK. The RRM domain occupies 600–674; that stretch reads TKLEVKKIPQ…RFIRVLWHRE (75 aa). Positions 809–886 form a coiled coil; that stretch reads VQEVLKKKQE…KDELKTSSAV (78 aa). Residue Ser-927 is modified to Phosphoserine. 2 disordered regions span residues 940–968 and 1006–1060; these read PVGR…SLNH and DRRL…SWRR. 2 positions are modified to phosphoserine: Ser-1012 and Ser-1020. The span at 1024-1053 shows a compositional bias: acidic residues; sequence ETEEEEVKEEETETSDLFLPDDDDEDEDEY.

The protein resides in the cytoplasm. It localises to the nucleus speckle. May be involved in the turnover of nuclear polyadenylated (pA+) RNA. The chain is RNA-binding protein 27 from Homo sapiens (Human).